The primary structure comprises 216 residues: Calcium-binding protein 2 (216 aa).

The disordered stretch occupies residues 1 to 41 (MGNCAKTPWHRGSKERWQWPGSPLGGSRPSPGPRTEEQEGT). G2 carries the N-myristoyl glycine lipid modification. Residues 20–29 (PGSPLGGSRP) are compositionally biased toward low complexity. EF-hand domains lie at 74-109 (EEIE…LGYM), 125-142 (GKVD…KLLA), 148-183 (IGVR…LLGE), and 185-216 (LSQR…MMSR). Residues D87, D89, D91, Y93, and E98 each coordinate Ca(2+). 9 residues coordinate Ca(2+): D161, N163, D165, C167, E172, D198, N200, D202, and E209.

In terms of tissue distribution, expressed in the inner hair cells (IHCs), outer hair cells,(OHCs) and vestibular hair cells within the ear and in the retina (at protein level). Expressed in the retinal cone type 6 ON-bipolar cells and type 1 OFF-bipolar cells (at protein level). Expressed in the organ of Corti and spiral ganglion neurons in the cochlea (at protein level).

Its subcellular location is the cytoplasm. It localises to the perinuclear region. The protein resides in the cell membrane. It is found in the golgi apparatus. In terms of biological role, required for sound encoding at inner hair cells (IHCs) synapses, likely via inhibition of the inactivation of voltage-gated calcium channel of type 1.3 (Cav1.3) in the IHCs. Required for the normal transfer of light signals through the retina. This chain is Calcium-binding protein 2 (Cabp2), found in Mus musculus (Mouse).